The following is a 344-amino-acid chain: Anthranilate phosphoribosyltransferase (344 aa).

Residues Gly-79, Gly-82–Asp-83, Thr-87, Asn-89–Thr-92, Lys-107–Ser-115, and Ser-119 contribute to the 5-phospho-alpha-D-ribose 1-diphosphate site. Gly-79 is a binding site for anthranilate. Ser-91 serves as a coordination point for Mg(2+). Residue Asn-110 participates in anthranilate binding. Anthranilate is bound at residue Arg-165. Residues Asp-224 and Glu-225 each coordinate Mg(2+).

Belongs to the anthranilate phosphoribosyltransferase family. In terms of assembly, homodimer. Mg(2+) is required as a cofactor.

It carries out the reaction N-(5-phospho-beta-D-ribosyl)anthranilate + diphosphate = 5-phospho-alpha-D-ribose 1-diphosphate + anthranilate. It functions in the pathway amino-acid biosynthesis; L-tryptophan biosynthesis; L-tryptophan from chorismate: step 2/5. Catalyzes the transfer of the phosphoribosyl group of 5-phosphorylribose-1-pyrophosphate (PRPP) to anthranilate to yield N-(5'-phosphoribosyl)-anthranilate (PRA). In Salinibacter ruber (strain DSM 13855 / M31), this protein is Anthranilate phosphoribosyltransferase.